Here is a 715-residue protein sequence, read N- to C-terminus: MVPGARGGGALARAAGRGLLALLLAVSAPLRLQAEELGDGCGHLVTYQDSGTMTSKNYPGTYPNHTVCEKTITVPKGKRLILRLGDLDIESQTCASDYLLFTSSSDQYGPYCGSMTVPKELLLNTSEVTVRFESGSHISGRGFLLTYASSDHPDLITCLERASHYLKTEYSKFCPAGCRDVAGDISGNMVDGYRDTSLLCKAAIHAGIIADELGGQISVLQRKGISRYEGILANGVLSRDGSLSDKRFLFTSNGCSRSLSFEPDGQIRASSSWQSVNESGDQVHWSPGQARLQDQGPSWASGDSSNNHKPREWLEIDLGEKKKITGIRTTGSTQSNFNFYVKSFVMNFKNNNSKWKTYKGIVNNEEKVFQGNSNFRDPVQNNFIPPIVARYVRVVPQTWHQRIALKVELIGCQITQGNDSLVWRKTSQSTSVSTKKEDETITRPIPSEETSTGINITTVAIPLVLLVVLVFAGMGIFAAFRKKKKKGSPYGSAEAQKTDCWKQIKYPFARHQSAEFTISYDNEKEMTQKLDLITSDMADYQQPLMIGTGTVTRKGSTFRPMDTDAEEAGVSTDAGGHYDCPQRAGRHEYALPLAPPEPEYATPIVERHVLRAHTFSAQSGYRVPGPQPGHKHSLSSGGFSPVAGVGAQDGDYQRPHSAQPADRGYDRPKAVSALATESGHPDSQKPPTHPGTSDSYSAPRDCLTPLNQTAMTALL.

The first 34 residues, 1 to 34 (MVPGARGGGALARAAGRGLLALLLAVSAPLRLQA), serve as a signal peptide directing secretion. Residues 35–459 (EELGDGCGHL…TSTGINITTV (425 aa)) lie on the Extracellular side of the membrane. 2 disulfide bridges follow: C41–C68 and C94–C112. Residues 41 to 150 (CGHLVTYQDS…RGFLLTYASS (110 aa)) enclose the CUB domain. N-linked (GlcNAc...) asparagine glycosylation occurs at N64. Residue N124 is glycosylated (N-linked (GlcNAc...) asparagine). The LCCL domain maps to 152-248 (HPDLITCLER…RDGSLSDKRF (97 aa)). Cystine bridges form between C158-C174 and C178-C200. Positions 248 to 412 (FLFTSNGCSR…IALKVELIGC (165 aa)) constitute an F5/8 type C domain. An N-linked (GlcNAc...) asparagine glycan is attached at N277. The disordered stretch occupies residues 278–312 (ESGDQVHWSPGQARLQDQGPSWASGDSSNNHKPRE). Residues 295 to 307 (QGPSWASGDSSNN) are compositionally biased toward polar residues. N351, N418, and N455 each carry an N-linked (GlcNAc...) asparagine glycan. A helical transmembrane segment spans residues 460–480 (AIPLVLLVVLVFAGMGIFAAF). The Cytoplasmic portion of the chain corresponds to 481-715 (RKKKKKGSPY…LNQTAMTALL (235 aa)). Phosphoserine is present on S513. The residue at position 614 (T614) is a Phosphothreonine. The segment at 619–702 (SGYRVPGPQP…SDSYSAPRDC (84 aa)) is disordered.

The protein resides in the membrane. This is Discoidin, CUB and LCCL domain-containing protein 1 (DCBLD1) from Homo sapiens (Human).